Reading from the N-terminus, the 342-residue chain is D-erythrose-4-phosphate dehydrogenase (342 aa).

12–13 (RI) is a binding site for NAD(+). Substrate is bound by residues 154–156 (SCT), arginine 200, 213–214 (TK), and arginine 236. The Nucleophile role is filled by cysteine 155. NAD(+) is bound at residue asparagine 318.

Belongs to the glyceraldehyde-3-phosphate dehydrogenase family. Epd subfamily. As to quaternary structure, homotetramer.

It is found in the cytoplasm. It carries out the reaction D-erythrose 4-phosphate + NAD(+) + H2O = 4-phospho-D-erythronate + NADH + 2 H(+). The protein operates within cofactor biosynthesis; pyridoxine 5'-phosphate biosynthesis; pyridoxine 5'-phosphate from D-erythrose 4-phosphate: step 1/5. Functionally, catalyzes the NAD-dependent conversion of D-erythrose 4-phosphate to 4-phosphoerythronate. This Klebsiella pneumoniae subsp. pneumoniae (strain ATCC 700721 / MGH 78578) protein is D-erythrose-4-phosphate dehydrogenase.